The following is a 156-amino-acid chain: Small ribosomal subunit protein uS7 (156 aa).

It belongs to the universal ribosomal protein uS7 family. As to quaternary structure, part of the 30S ribosomal subunit. Contacts proteins S9 and S11.

Its function is as follows. One of the primary rRNA binding proteins, it binds directly to 16S rRNA where it nucleates assembly of the head domain of the 30S subunit. Is located at the subunit interface close to the decoding center, probably blocks exit of the E-site tRNA. The chain is Small ribosomal subunit protein uS7 from Citrifermentans bemidjiense (strain ATCC BAA-1014 / DSM 16622 / JCM 12645 / Bem) (Geobacter bemidjiensis).